An 89-amino-acid chain; its full sequence is Cell division topological specificity factor (89 aa).

The protein belongs to the MinE family.

Its function is as follows. Prevents the cell division inhibition by proteins MinC and MinD at internal division sites while permitting inhibition at polar sites. This ensures cell division at the proper site by restricting the formation of a division septum at the midpoint of the long axis of the cell. The chain is Cell division topological specificity factor from Sodalis glossinidius (strain morsitans).